Here is a 217-residue protein sequence, read N- to C-terminus: CASP-like protein UU4 (217 aa).

Residues Met-1–Glu-11 show a composition bias toward basic and acidic residues. The segment at Met-1–Asn-21 is disordered. Over Met-1–Gly-61 the chain is Cytoplasmic. The chain crosses the membrane as a helical span at residues Leu-62–Ala-82. Topologically, residues Ser-83–Ser-98 are extracellular. A helical membrane pass occupies residues Phe-99–Val-119. The Cytoplasmic segment spans residues Met-120–Gln-141. Residues Leu-142–Asn-162 traverse the membrane as a helical segment. The Extracellular segment spans residues Arg-163–Glu-187. The helical transmembrane segment at Ala-188–Val-208 threads the bilayer. The Cytoplasmic portion of the chain corresponds to Tyr-209–Leu-217.

This sequence belongs to the Casparian strip membrane proteins (CASP) family. In terms of assembly, homodimer and heterodimers.

The protein resides in the cell membrane. The polypeptide is CASP-like protein UU4 (Physcomitrium patens (Spreading-leaved earth moss)).